Here is a 290-residue protein sequence, read N- to C-terminus: Probable endonuclease 4 (290 aa).

Positions 69, 109, 145, 179, 182, 216, 229, 231, and 261 each coordinate Zn(2+).

Belongs to the AP endonuclease 2 family. It depends on Zn(2+) as a cofactor.

The enzyme catalyses Endonucleolytic cleavage to 5'-phosphooligonucleotide end-products.. In terms of biological role, endonuclease IV plays a role in DNA repair. It cleaves phosphodiester bonds at apurinic or apyrimidinic (AP) sites, generating a 3'-hydroxyl group and a 5'-terminal sugar phosphate. The protein is Probable endonuclease 4 of Chlorobium limicola (strain DSM 245 / NBRC 103803 / 6330).